The chain runs to 1114 residues: WD repeat-containing protein 72 (1114 aa).

WD repeat units follow at residues 15 to 54 (APPH…KISA), 60 to 102 (GHSA…CVEK), 160 to 197 (KCMC…NSIQ), 327 to 373 (EENK…SKFD), 413 to 452 (GMTA…KAGL), 470 to 515 (GHHQ…ILHT), and 566 to 605 (KHLF…LERH). 2 disordered regions span residues 634–658 (SETH…VPCP) and 749–798 (SLQT…PPRK). The span at 780–796 (KRQKKMKSSKKAHPKPP) shows a compositional bias: basic residues. Serine 1093 and serine 1095 each carry phosphoserine.

As to expression, expressed in maturation stage ameloblasts (at protein level).

It is found in the cytoplasmic vesicle. In terms of biological role, plays a major role in formation of tooth enamel. Specifically required during the maturation phase of amelogenesis for normal formation of the enamel matrix and clearance of enamel proteins. May be involved in localization of the calcium transporter SLC24A4 to the ameloblast cell membrane. This is WD repeat-containing protein 72 from Mus musculus (Mouse).